The primary structure comprises 157 residues: Ribonuclease 8 (157 aa).

A signal peptide spans 1-30 (MAPARAGCCPLLLLLLLLLGLWVAEVLVSA). Residue His-45 is the Proton acceptor of the active site. Intrachain disulfides connect Cys-53-Cys-96, Cys-67-Cys-121, Cys-85-Cys-136, and Cys-92-Cys-99. Substrate-binding positions include 68 to 72 (KDLNT) and Lys-93. Catalysis depends on His-152, which acts as the Proton donor.

It belongs to the pancreatic ribonuclease family.

The protein localises to the secreted. Functionally, has a low ribonuclease activity. The protein is Ribonuclease 8 (RNASE8) of Pan troglodytes (Chimpanzee).